The following is a 154-amino-acid chain: 6,7-dimethyl-8-ribityllumazine synthase (154 aa).

Residues Trp-22, 56–58, and 80–82 contribute to the 5-amino-6-(D-ribitylamino)uracil site; these read AWE and CVI. Position 85-86 (85-86) interacts with (2S)-2-hydroxy-3-oxobutyl phosphate; it reads DT. Catalysis depends on His-88, which acts as the Proton donor. 5-amino-6-(D-ribitylamino)uracil is bound at residue Asn-113. Arg-127 is a (2S)-2-hydroxy-3-oxobutyl phosphate binding site.

Belongs to the DMRL synthase family. Forms an icosahedral capsid composed of 60 subunits, arranged as a dodecamer of pentamers.

The catalysed reaction is (2S)-2-hydroxy-3-oxobutyl phosphate + 5-amino-6-(D-ribitylamino)uracil = 6,7-dimethyl-8-(1-D-ribityl)lumazine + phosphate + 2 H2O + H(+). The protein operates within cofactor biosynthesis; riboflavin biosynthesis; riboflavin from 2-hydroxy-3-oxobutyl phosphate and 5-amino-6-(D-ribitylamino)uracil: step 1/2. Its function is as follows. Catalyzes the formation of 6,7-dimethyl-8-ribityllumazine by condensation of 5-amino-6-(D-ribitylamino)uracil with 3,4-dihydroxy-2-butanone 4-phosphate. This is the penultimate step in the biosynthesis of riboflavin. The sequence is that of 6,7-dimethyl-8-ribityllumazine synthase from Xanthomonas oryzae pv. oryzae (strain MAFF 311018).